A 472-amino-acid chain; its full sequence is Aspartyl/glutamyl-tRNA(Asn/Gln) amidotransferase subunit B (472 aa).

Belongs to the GatB/GatE family. GatB subfamily. Heterotrimer of A, B and C subunits.

The catalysed reaction is L-glutamyl-tRNA(Gln) + L-glutamine + ATP + H2O = L-glutaminyl-tRNA(Gln) + L-glutamate + ADP + phosphate + H(+). It carries out the reaction L-aspartyl-tRNA(Asn) + L-glutamine + ATP + H2O = L-asparaginyl-tRNA(Asn) + L-glutamate + ADP + phosphate + 2 H(+). In terms of biological role, allows the formation of correctly charged Asn-tRNA(Asn) or Gln-tRNA(Gln) through the transamidation of misacylated Asp-tRNA(Asn) or Glu-tRNA(Gln) in organisms which lack either or both of asparaginyl-tRNA or glutaminyl-tRNA synthetases. The reaction takes place in the presence of glutamine and ATP through an activated phospho-Asp-tRNA(Asn) or phospho-Glu-tRNA(Gln). The sequence is that of Aspartyl/glutamyl-tRNA(Asn/Gln) amidotransferase subunit B from Campylobacter jejuni (strain RM1221).